We begin with the raw amino-acid sequence, 125 residues long: Small ribosomal subunit protein bS6 (125 aa).

Positions 101 to 125 (PMMKEEKAKNLLAPQSDAAEPTAAA) are disordered.

This sequence belongs to the bacterial ribosomal protein bS6 family.

Its function is as follows. Binds together with bS18 to 16S ribosomal RNA. This Laribacter hongkongensis (strain HLHK9) protein is Small ribosomal subunit protein bS6.